Consider the following 250-residue polypeptide: Tail assembly protein GT (250 aa).

The protein belongs to the lambda-like tail assembly protein family. Interacts (via C-terminus) with tail tube protein. Interacts (via N-terminus) with the tail assembly protein G and the tape measure protein.

It localises to the host cytoplasm. Promotes tail assembly by creating a scaffold for the tail tube proteins. Tail assembly proteins G and GT probably wrap the linear tape measure protein to create a tail assembly scaffold. This allows the polymerization of the tail tube protein, during which G and GT are released, therefore they are absent in the mature virion. The tail assembly protein GT is produced by a rare -1 ribosomal frameshift. The ratio of translated G/GT is about 20, and this ratio is important for proper tail assembly. In Escherichia coli (Bacteriophage N15), this protein is Tail assembly protein GT.